The following is a 237-amino-acid chain: Flagellar L-ring protein (237 aa).

The signal sequence occupies residues 1-24 (MNRPGFPRFSVLIASLCGITLLSG). A lipid anchor (N-palmitoyl cysteine) is attached at Cys25. Cys25 is lipidated: S-diacylglycerol cysteine.

Belongs to the FlgH family. As to quaternary structure, the basal body constitutes a major portion of the flagellar organelle and consists of four rings (L,P,S, and M) mounted on a central rod.

The protein resides in the cell outer membrane. It localises to the bacterial flagellum basal body. In terms of biological role, assembles around the rod to form the L-ring and probably protects the motor/basal body from shearing forces during rotation. The sequence is that of Flagellar L-ring protein from Pseudomonas syringae pv. tomato (strain ATCC BAA-871 / DC3000).